A 299-amino-acid polypeptide reads, in one-letter code: NmrA-like family domain-containing protein 1 (299 aa).

NADP(+)-binding positions include 11–16 (GATGAQ), 37–41 (RDPGQ), 58–59 (DQ), 79–81 (TNY), lysine 92, lysine 133, and 155–158 (YFEN). An interaction with ASS1 region spans residues 153 to 189 (PCYFENLLSYFLPQKAPDGRSYLLSLPMGDVPIDGMS).

This sequence belongs to the NmrA-type oxidoreductase family. Homodimer. Interacts with ASS1. Interaction is enhanced by low NADPH/NADP(+) ratios, which results in inhibition of ASS1 activity.

The protein resides in the cytoplasm. The protein localises to the perinuclear region. Its subcellular location is the nucleus. Redox sensor protein. Undergoes restructuring and subcellular redistribution in response to changes in intracellular NADPH/NADP(+) levels. At low NADPH concentrations the protein is found mainly as a monomer, and binds argininosuccinate synthase (ASS1), the enzyme involved in nitric oxide synthesis. Association with ASS1 impairs its activity and reduces the production of nitric oxide, which subsecuently prevents apoptosis. Under normal NADPH concentrations, the protein is found as a dimer and hides the binding site for ASS1. The homodimer binds one molecule of NADPH. Has higher affinity for NADPH than for NADP(+). Binding to NADPH is necessary to form a stable dimer. The protein is NmrA-like family domain-containing protein 1 (NMRAL1) of Bos taurus (Bovine).